We begin with the raw amino-acid sequence, 377 residues long: Prostaglandin reductase-3 (377 aa).

Lys-35 carries the post-translational modification N6-acetyllysine. NADP(+)-binding residues include Thr-185, Ser-205, Lys-209, Tyr-224, Ser-247, Ile-269, and Tyr-275. The residue at position 299 (Ser-299) is a Phosphoserine. NADP(+)-binding positions include 303–305 and Asn-361; that span reads FFL.

Belongs to the zinc-containing alcohol dehydrogenase family. Quinone oxidoreductase subfamily.

It localises to the peroxisome. The catalysed reaction is 13,14-dihydro-15-oxo-prostaglandin E2 + NADP(+) = 15-oxoprostaglandin E2 + NADPH + H(+). It carries out the reaction 13,14-dihydro-15-oxo-prostaglandin E1 + NADP(+) = 15-oxoprostaglandin E1 + NADPH + H(+). It catalyses the reaction 13,14-dihydro-15-oxo-PGF2alpha + NADP(+) = 15-oxoprostaglandin F2alpha + NADPH + H(+). The enzyme catalyses 13,14-dihydro-15-oxo-prostaglandin F1alpha + NADP(+) = 15-oxoprostaglandin F1alpha + NADPH + H(+). Its function is as follows. Functions as 15-oxo-prostaglandin 13-reductase and acts on 15-keto-PGE1, 15-keto-PGE2, 15-keto-PGE1-alpha and 15-keto-PGE2-alpha with highest efficiency towards 15-keto-PGE2-alpha. Overexpression represses transcriptional activity of PPARG and inhibits adipocyte differentiation. This chain is Prostaglandin reductase-3 (PTGR3), found in Bos taurus (Bovine).